Reading from the N-terminus, the 246-residue chain is Ubiquinone biosynthesis O-methyltransferase (246 aa).

Positions 44, 63, 84, and 128 each coordinate S-adenosyl-L-methionine.

Belongs to the methyltransferase superfamily. UbiG/COQ3 family.

The enzyme catalyses a 3-demethylubiquinol + S-adenosyl-L-methionine = a ubiquinol + S-adenosyl-L-homocysteine + H(+). It carries out the reaction a 3-(all-trans-polyprenyl)benzene-1,2-diol + S-adenosyl-L-methionine = a 2-methoxy-6-(all-trans-polyprenyl)phenol + S-adenosyl-L-homocysteine + H(+). It functions in the pathway cofactor biosynthesis; ubiquinone biosynthesis. In terms of biological role, O-methyltransferase that catalyzes the 2 O-methylation steps in the ubiquinone biosynthetic pathway. The chain is Ubiquinone biosynthesis O-methyltransferase from Xylella fastidiosa (strain Temecula1 / ATCC 700964).